Consider the following 284-residue polypeptide: MGVESVRCPLHFTKMQGAGNDFVVLDLRDGTPPPDAALVAWLADRHFGIGCDQVIAIEPPRGVGVFAAYRIWNADGSAAQQCGNGARCVAAWLVRDGSVATEHFLIDSPVQTHSVRCIGKDEYAVEMGLPVFEPERIPLSGFPNALGEYVLSLQGEVLCCGAVSMGNPHAVVEVDLIDVAPVERIGPLLQQHSAFPESVNVSFVQVIDPGLVRLRVYERGAGETLACGSGACAAAVVLMQRGRVGRDVRVVLPGGTLRVQWPVSGGPVTLSGPARCVFDGVWYG.

Positions 20, 53, and 73 each coordinate substrate. C82 serves as the catalytic Proton donor. Substrate-binding positions include 83–84 (GN), N167, N200, and 218–219 (ER). C227 acts as the Proton acceptor in catalysis. 228–229 (GS) lines the substrate pocket.

It belongs to the diaminopimelate epimerase family. In terms of assembly, homodimer.

It is found in the cytoplasm. The catalysed reaction is (2S,6S)-2,6-diaminopimelate = meso-2,6-diaminopimelate. The protein operates within amino-acid biosynthesis; L-lysine biosynthesis via DAP pathway; DL-2,6-diaminopimelate from LL-2,6-diaminopimelate: step 1/1. Functionally, catalyzes the stereoinversion of LL-2,6-diaminopimelate (L,L-DAP) to meso-diaminopimelate (meso-DAP), a precursor of L-lysine and an essential component of the bacterial peptidoglycan. The polypeptide is Diaminopimelate epimerase (Xylella fastidiosa (strain M23)).